Here is a 97-residue protein sequence, read N- to C-terminus: Putative membrane protein insertion efficiency factor (97 aa).

It belongs to the UPF0161 family.

Its subcellular location is the cell inner membrane. In terms of biological role, could be involved in insertion of integral membrane proteins into the membrane. The chain is Putative membrane protein insertion efficiency factor from Chlamydia muridarum (strain MoPn / Nigg).